The primary structure comprises 465 residues: UDP-N-acetylmuramoylalanine--D-glutamate ligase (465 aa).

112–118 (GTDGKTT) contributes to the ATP binding site.

Belongs to the MurCDEF family.

The protein localises to the cytoplasm. It carries out the reaction UDP-N-acetyl-alpha-D-muramoyl-L-alanine + D-glutamate + ATP = UDP-N-acetyl-alpha-D-muramoyl-L-alanyl-D-glutamate + ADP + phosphate + H(+). It participates in cell wall biogenesis; peptidoglycan biosynthesis. Its function is as follows. Cell wall formation. Catalyzes the addition of glutamate to the nucleotide precursor UDP-N-acetylmuramoyl-L-alanine (UMA). This Chlorobium limicola (strain DSM 245 / NBRC 103803 / 6330) protein is UDP-N-acetylmuramoylalanine--D-glutamate ligase.